The sequence spans 306 residues: uncharacterized protein (306 aa).

9 helical membrane passes run 6 to 26 (VQIM…FPGI), 37 to 57 (HLAL…AVLT), 67 to 87 (IPAI…LLNI), 91 to 111 (TVSA…SAML), 125 to 145 (WLGS…AGDF), 148 to 168 (SMSG…YFVF), 177 to 197 (GFIP…LVFL), 213 to 233 (LSIV…LAYV), and 251 to 271 (ALAL…LSLL). EamA domains follow at residues 17-140 (GLWA…LIAF) and 160-285 (FSES…FTYL).

The protein belongs to the EamA transporter family.

It localises to the cell membrane. This is an uncharacterized protein from Bacillus subtilis (strain 168).